The sequence spans 137 residues: Large ribosomal subunit protein uL13 (137 aa).

Belongs to the universal ribosomal protein uL13 family. In terms of assembly, part of the 50S ribosomal subunit.

In terms of biological role, this protein is one of the early assembly proteins of the 50S ribosomal subunit, although it is not seen to bind rRNA by itself. It is important during the early stages of 50S assembly. This chain is Large ribosomal subunit protein uL13, found in Methanococcus maripaludis (strain DSM 14266 / JCM 13030 / NBRC 101832 / S2 / LL).